A 650-amino-acid polypeptide reads, in one-letter code: DNA gyrase subunit B (650 aa).

The Toprim domain maps to 429-543 (NELFIVEGDS…AGYVYIAQPP (115 aa)). Positions 435, 508, and 510 each coordinate Mg(2+).

This sequence belongs to the type II topoisomerase GyrB family. Heterotetramer, composed of two GyrA and two GyrB chains. In the heterotetramer, GyrA contains the active site tyrosine that forms a transient covalent intermediate with DNA, while GyrB binds cofactors and catalyzes ATP hydrolysis. The cofactor is Mg(2+). Mn(2+) serves as cofactor. Requires Ca(2+) as cofactor.

It localises to the cytoplasm. The catalysed reaction is ATP-dependent breakage, passage and rejoining of double-stranded DNA.. In terms of biological role, a type II topoisomerase that negatively supercoils closed circular double-stranded (ds) DNA in an ATP-dependent manner to modulate DNA topology and maintain chromosomes in an underwound state. Negative supercoiling favors strand separation, and DNA replication, transcription, recombination and repair, all of which involve strand separation. Also able to catalyze the interconversion of other topological isomers of dsDNA rings, including catenanes and knotted rings. Type II topoisomerases break and join 2 DNA strands simultaneously in an ATP-dependent manner. The polypeptide is DNA gyrase subunit B (Streptococcus pyogenes serotype M18 (strain MGAS8232)).